The following is a 218-amino-acid chain: Protein GrpE (218 aa).

Positions 1–75 are disordered; sequence MTTPNGMPDN…DVDPDLDGDG (75 aa). The segment covering 23-40 has biased composition (basic and acidic residues); the sequence is SADRAEQAAEEAAARQAE. Positions 48–75 are enriched in acidic residues; the sequence is SEEEISPELEAEINDLLSDVDPDLDGDG.

It belongs to the GrpE family. In terms of assembly, homodimer.

It is found in the cytoplasm. Its function is as follows. Participates actively in the response to hyperosmotic and heat shock by preventing the aggregation of stress-denatured proteins, in association with DnaK and GrpE. It is the nucleotide exchange factor for DnaK and may function as a thermosensor. Unfolded proteins bind initially to DnaJ; upon interaction with the DnaJ-bound protein, DnaK hydrolyzes its bound ATP, resulting in the formation of a stable complex. GrpE releases ADP from DnaK; ATP binding to DnaK triggers the release of the substrate protein, thus completing the reaction cycle. Several rounds of ATP-dependent interactions between DnaJ, DnaK and GrpE are required for fully efficient folding. This Corynebacterium glutamicum (strain ATCC 13032 / DSM 20300 / JCM 1318 / BCRC 11384 / CCUG 27702 / LMG 3730 / NBRC 12168 / NCIMB 10025 / NRRL B-2784 / 534) protein is Protein GrpE.